Here is a 271-residue protein sequence, read N- to C-terminus: N-acetyltransferase ECO1 (271 aa).

A CCHH-type zinc finger spans residues 26–50 (VKCPKCSITYSTNSPSDLVQHKRYH). The N-acetyltransferase domain maps to 109-271 (VMISPKKANE…SGKLLIPCYI (163 aa)).

This sequence belongs to the acetyltransferase family. ECO subfamily.

Its subcellular location is the nucleus. Probable acetyltransferase required for the establishment of sister chromatid cohesion and couple the processes of cohesion and DNA replication to ensure that only sister chromatids become paired together. In contrast to the structural cohesins, the deposition and establishment factors are required only during S phase. Acts by acetylating the cohesin complex component SMC3. In Kluyveromyces lactis (strain ATCC 8585 / CBS 2359 / DSM 70799 / NBRC 1267 / NRRL Y-1140 / WM37) (Yeast), this protein is N-acetyltransferase ECO1 (ECO1).